The chain runs to 831 residues: Periplasmic nitrate reductase (831 aa).

The tat-type signal signal peptide spans 1-29; it reads MKISRRDFIKQTAITATASVAGVTLPAGA. Residues 41–97 form the 4Fe-4S Mo/W bis-MGD-type domain; the sequence is LKWSKAPCRFCGTGCGVTVAVKDNKVVATQGDPQAEVNKGLNCVKGYFLSKIMYGQD. Positions 48, 51, 55, and 83 each coordinate [4Fe-4S] cluster. Residues lysine 85, glutamine 152, asparagine 177, cysteine 181, 214 to 221, 245 to 249, 264 to 266, methionine 375, glutamine 379, asparagine 485, 511 to 512, lysine 534, aspartate 561, and 721 to 730 contribute to the Mo-bis(molybdopterin guanine dinucleotide) site; these read WGSNMAEM, STFTH, QTD, SD, and TGRVLEHWHS. Tryptophan 797 contributes to the substrate binding site. Residues asparagine 805 and lysine 822 each contribute to the Mo-bis(molybdopterin guanine dinucleotide) site.

Belongs to the prokaryotic molybdopterin-containing oxidoreductase family. NasA/NapA/NarB subfamily. Component of the periplasmic nitrate reductase NapAB complex composed of NapA and NapB. The cofactor is [4Fe-4S] cluster. Mo-bis(molybdopterin guanine dinucleotide) serves as cofactor. Post-translationally, predicted to be exported by the Tat system. The position of the signal peptide cleavage has been experimentally proven.

It is found in the periplasm. It catalyses the reaction 2 Fe(II)-[cytochrome] + nitrate + 2 H(+) = 2 Fe(III)-[cytochrome] + nitrite + H2O. Catalytic subunit of the periplasmic nitrate reductase complex NapAB. Receives electrons from NapB and catalyzes the reduction of nitrate to nitrite. The polypeptide is Periplasmic nitrate reductase (Cupriavidus necator (strain ATCC 17699 / DSM 428 / KCTC 22496 / NCIMB 10442 / H16 / Stanier 337) (Ralstonia eutropha)).